The following is a 744-amino-acid chain: MGSGASKNTEEDDDGSNGGGGQLYVSLKMENSKVEGELTPHVYGSLPLIGSWDPSKALPMQRESALMSELSFVVPPDHETLDFKFLLKPKNRNTPCIVEEGENRLLTGGSLQGDARLALFRLEGDVIVEFRVFINADRVSPIDLATSWRAYRENLQPSTVRGIPDVSINPDPKSAECPLESLELDLAHYEVPAPAPSANSYLVYAADNAENPRSLSASGSFRNDSTPKAAQRNSEDSGVTVDGSPSAKEMTIVVPDSSNIYSAFGEAESKSVETLSPFQQKDGQKGLFVDRGVGSPRLVKSLSASSFLIDTKQIKNSMPAAAGAVAAAAVADQMLGPKEDRHLAIVLVGLPARGKTFTAAKLTRYLRWLGHDTKHFNVGKYRRLKHGVNMSADFFRADNPEGVEARTEVAALAMEDMIAWMQEGGQVGIFDATNSTRVRRNMLMKMAEGKCKIIFLETLCNDERIIERNIRLKIQQSPDYSEEMDFEAGVRDFRDRLANYEKVYEPVEEGSYIKMIDMVSGNGGQIQVNNISGYLPGRIVFFLVNTHLTPRPILLTRHGESMDNVRGRIGGDSVISDSGKLYAKKLASFVEKRLKSEKAASIWTSTLQRTNLTASSIVGFPKVQWRALDEINAGVCDGMTYEEVKKNMPEEYESRKKDKLRYRYPRGESYLDVIQRLEPVIIELERQRAPVVVISHQAVLRALYAYFADRPLKEIPQIEMPLHTIIEIQMGVSGVQEKRYKLMD.

Disordered regions lie at residues Met1–Leu23 and Arg213–Pro245. Gly2 carries N-myristoyl glycine lipidation. The CBM20 domain occupies Asn17 to Leu122. Positions Arg213–Arg232 are enriched in polar residues. Position 220 is a phosphoserine; by CPK3 (Ser220). Ser276 and Ser295 each carry phosphoserine. A 6-phosphofructo-2-kinase region spans residues Ser301–Thr549. Position 303 is a phosphoserine; by CPK3 (Ser303). Gly349–Phe357 is a binding site for ATP. Residues Arg382 and Arg406 each coordinate beta-D-fructose 6-phosphate. Asp431 is an active-site residue. Residues Thr433 and Arg439 each coordinate beta-D-fructose 6-phosphate. Cys460 is an active-site residue. Position 469-474 (Asn469–Ile474) interacts with ATP. 2 residues coordinate beta-D-fructose 6-phosphate: Arg496 and Tyr500. The fructose-2,6-bisphosphatase stretch occupies residues Pro550–Asp744. Position 557 (Arg557) interacts with beta-D-fructose 2,6-bisphosphate. Residue His558 is the Tele-phosphohistidine intermediate of the active site. Asn564 and Gly570 together coordinate beta-D-fructose 2,6-bisphosphate. Glu630 (proton donor/acceptor) is an active-site residue. The beta-D-fructose 2,6-bisphosphate site is built by Tyr641, Arg655, Lys659, Tyr670, Gln697, and Arg701. Tyr652 to Arg655 contributes to the ATP binding site. Gln697–Arg701 lines the ATP pocket.

In the C-terminal section; belongs to the phosphoglycerate mutase family. As to quaternary structure, interacts with 14-3-3 proteins; these interactions may regulate both nitrate assimilation and sucrose/starch partitioning in leaves during the diurnal cycle. Post-translationally, phosphorylation at Ser-220 and Ser-303 by CPK3 promotes 14-3-3 proteins binding.

The protein resides in the membrane. The protein localises to the cytoplasm. The enzyme catalyses beta-D-fructose 2,6-bisphosphate + H2O = beta-D-fructose 6-phosphate + phosphate. It catalyses the reaction beta-D-fructose 6-phosphate + ATP = beta-D-fructose 2,6-bisphosphate + ADP + H(+). 6-phosphofructo-2-kinase activity is activated by pyruvate. 6-phosphofructo-2-kinase activity is inhibited by PPi, phosphoenolpyruvate and 2-phosphoglycerate. Fructose-2,6-bisphosphatase activity is inhibited by pyruvate, fructose 1,6-bisphosphate and 6-phosphogluconate. In terms of biological role, synthesis and degradation of fructose 2,6-bisphosphate. Regulates carbon partitioning between sucrose versus starch during the diurnal cycle. The sequence is that of 6-phosphofructo-2-kinase/fructose-2,6-bisphosphatase (FKFBP) from Arabidopsis thaliana (Mouse-ear cress).